The primary structure comprises 219 residues: Elongation factor Ts (219 aa).

The tract at residues Thr-82–Val-85 is involved in Mg(2+) ion dislocation from EF-Tu.

It belongs to the EF-Ts family.

The protein resides in the cytoplasm. Its function is as follows. Associates with the EF-Tu.GDP complex and induces the exchange of GDP to GTP. It remains bound to the aminoacyl-tRNA.EF-Tu.GTP complex up to the GTP hydrolysis stage on the ribosome. This is Elongation factor Ts from Anaeromyxobacter sp. (strain Fw109-5).